The following is a 252-amino-acid chain: uncharacterized protein (252 aa).

Positions 3-58 constitute an HTH deoR-type domain; that stretch reads AKDRIQAIKQMVANDKKVTVSNLSGIFQVTEETIRRDLEKLEDEGFLTRTYGGAVL. Residues 20–39 constitute a DNA-binding region (H-T-H motif); that stretch reads VTVSNLSGIFQVTEETIRRD.

This is an uncharacterized protein from Escherichia coli (strain K12).